The following is a 210-amino-acid chain: Thymidylate kinase (210 aa).

10-17 contributes to the ATP binding site; that stretch reads GPEGAGKS.

It belongs to the thymidylate kinase family.

It carries out the reaction dTMP + ATP = dTDP + ADP. Phosphorylation of dTMP to form dTDP in both de novo and salvage pathways of dTTP synthesis. The sequence is that of Thymidylate kinase from Pseudomonas paraeruginosa (strain DSM 24068 / PA7) (Pseudomonas aeruginosa (strain PA7)).